Consider the following 293-residue polypeptide: Protease HtpX (293 aa).

The next 2 helical transmembrane spans lie at 4-24 and 34-54; these read IALF…VLSL and GLMI…LLMS. Residue His-139 coordinates Zn(2+). Glu-140 is a catalytic residue. His-143 contributes to the Zn(2+) binding site. A run of 2 helical transmembrane segments spans residues 158-178 and 193-213; these read IVNT…AGFL and MVYF…ASII. Residue Glu-222 coordinates Zn(2+).

The protein belongs to the peptidase M48B family. Zn(2+) serves as cofactor.

It is found in the cell inner membrane. In Yersinia enterocolitica serotype O:8 / biotype 1B (strain NCTC 13174 / 8081), this protein is Protease HtpX.